A 271-amino-acid polypeptide reads, in one-letter code: Metal-staphylopine import system ATP-binding protein CntD (271 aa).

Residues 6 to 251 (VKHLTITDTW…PEHVYTKYLL (246 aa)) form the ABC transporter domain. 38–45 (GESGSGKS) lines the ATP pocket.

The protein belongs to the ABC transporter superfamily. As to quaternary structure, the complex is composed of two ATP-binding proteins (CntD and CntF), two transmembrane proteins (CntB and CntC) and a solute-binding protein (CntA).

It is found in the cell membrane. Part of the ABC transporter complex CntABCDF (Opp1) involved in the uptake of metal in complex with the metallophore staphylopine (StP). May be involved in the import of a large array of divalent metals ions such as nickel, cobalt, zinc, copper and iron. Probably responsible for energy coupling to the transport system. The chain is Metal-staphylopine import system ATP-binding protein CntD from Staphylococcus aureus (strain Mu50 / ATCC 700699).